The following is a 120-amino-acid chain: Ribonuclease P protein component (120 aa).

The protein belongs to the RnpA family. Consists of a catalytic RNA component (M1 or rnpB) and a protein subunit.

It catalyses the reaction Endonucleolytic cleavage of RNA, removing 5'-extranucleotides from tRNA precursor.. Functionally, RNaseP catalyzes the removal of the 5'-leader sequence from pre-tRNA to produce the mature 5'-terminus. It can also cleave other RNA substrates such as 4.5S RNA. The protein component plays an auxiliary but essential role in vivo by binding to the 5'-leader sequence and broadening the substrate specificity of the ribozyme. This chain is Ribonuclease P protein component, found in Blochmanniella floridana.